A 189-amino-acid chain; its full sequence is Probable nicotinate-nucleotide adenylyltransferase (189 aa).

This sequence belongs to the NadD family.

It carries out the reaction nicotinate beta-D-ribonucleotide + ATP + H(+) = deamido-NAD(+) + diphosphate. The protein operates within cofactor biosynthesis; NAD(+) biosynthesis; deamido-NAD(+) from nicotinate D-ribonucleotide: step 1/1. Its function is as follows. Catalyzes the reversible adenylation of nicotinate mononucleotide (NaMN) to nicotinic acid adenine dinucleotide (NaAD). The sequence is that of Probable nicotinate-nucleotide adenylyltransferase from Staphylococcus aureus (strain MRSA252).